An 889-amino-acid polypeptide reads, in one-letter code: Potassium/sodium hyperpolarization-activated cyclic nucleotide-gated channel 2 (889 aa).

Residues 1–10 (MDARGGGGRP) show a composition bias toward gly residues. Positions 1 to 159 (MDARGGGGRP…GPAGEPRGSQ (159 aa)) are disordered. Residues 1–215 (MDARGGGGRP…PYSDFRFYWD (215 aa)) lie on the Cytoplasmic side of the membrane. The segment covering 17 to 55 (TPAPGPPPPPPPAPPQQQPPPPPPPAPPPGPGPAPPQHP) has biased composition (pro residues). Residues 129-155 (GAASGPAPGPGPAEEAGSEEAGPAGEP) are compositionally biased toward low complexity. 2 positions are modified to phosphoserine: Ser-146 and Ser-161. An involved in subunit assembly region spans residues 158–209 (SQASFMQRQFGALLQPGVNKFSLRMFGSQKAVEREQERVKSAGAWIIHPYSD). The helical transmembrane segment at 216–236 (FTMLLFMVGNLIIIPVGITFF) threads the bilayer. The Extracellular segment spans residues 237 to 240 (KDET). Residues 241 to 261 (TAPWIVFNVVSDTFFLMDLVL) form a helical membrane-spanning segment. Topologically, residues 262–288 (NFRTGIVIEDNTEIILDPEKIKKKYLR) are cytoplasmic. Residues 289-309 (TWFVVDFVSSIPVDYIFLIVE) form a helical membrane-spanning segment. The Extracellular portion of the chain corresponds to 310-317 (KGIDSEVY). The chain crosses the membrane as a helical; Voltage-sensor span at residues 318 to 338 (KTARALRIVRFTKILSLLRLL). Topologically, residues 339–369 (RLSRLIRYIHQWEEIFHMTYDLASAVMRICN) are cytoplasmic. Residues 370–390 (LISMMLLLCHWDGCLQFLVPM) form a helical membrane-spanning segment. Over 391–413 (LQDFPRNCWVSINGMVNHSWSEL) the chain is Extracellular. Asn-407 carries an N-linked (GlcNAc...) asparagine glycan. Residues 414-435 (YSFALFKAMSHMLCIGYGRQAP) constitute an intramembrane region (pore-forming). Residues 436 to 440 (ESMTD) lie on the Extracellular side of the membrane. The helical transmembrane segment at 441-461 (IWLTMLSMIVGATCYAMFIGH) threads the bilayer. The Cytoplasmic segment spans residues 462-889 (ATALIQSLDS…SARSRLSSNL (428 aa)). Residues Met-599, Gly-608, Glu-609, Ile-610, Cys-611, Arg-618, Thr-619, and Arg-659 each coordinate 3',5'-cyclic AMP. A Phosphoserine; by PKG/PRKG2 modification is found at Ser-668. Ser-754 carries the post-translational modification Phosphoserine. The tract at residues 754–889 (SPRLVRRPPP…SARSRLSSNL (136 aa)) is disordered. Arg-756 carries the omega-N-methylarginine modification. A compositionally biased stretch (pro residues) spans 760 to 784 (RPPPGPAPAAASPGPPPPASPPGAP). Phosphoserine is present on residues Ser-771, Ser-779, Ser-786, Ser-866, and Ser-868. Residues 785 to 860 (ASPRAPRTSP…TPAARAAAPS (76 aa)) are compositionally biased toward low complexity.

This sequence belongs to the potassium channel HCN family. In terms of assembly, homotetramer. The channel is composed of a homo- or heterotetrameric complex of pore-forming subunits. Heterotetramer with HCN1. Forms an obligate 4:4 complex with accessory subunit PEX5L. Interacts with KCNE2. In terms of processing, phosphorylation at Ser-668 by PRKG2 shifts the voltage-dependence to more negative voltages, hence counteracting the stimulatory effect of cGMP on gating. S-palmitoylated. Post-translationally, N-glycosylated; required for cell surface trafficking of HCN2. Highly expressed throughout the brain. Detected at low levels in heart.

It localises to the cell membrane. It carries out the reaction Na(+)(in) = Na(+)(out). The enzyme catalyses K(+)(in) = K(+)(out). It catalyses the reaction NH4(+)(in) = NH4(+)(out). With respect to regulation, activated by cAMP, and at 10-100 times higher concentrations, also by cGMP. cAMP binding causes a conformation change that leads to the assembly of an active tetramer and channel opening. Binding of cAMP removes a tonic inhibition conferred by cyclic nucleotide-binding domain (CNBD) on channel opening. Channel activity is modulated by intracellular chloride ions and pH; acidic pH shifts the activation to more negative voltages. Inhibited by extracellular cesium ions. Its function is as follows. Hyperpolarization-activated ion channel that is permeable to sodium and potassium ions. Displays lower selectivity for K(+) over Na(+) ions. Contributes to the native pacemaker currents in heart (If) and in neurons (Ih). Can also transport ammonium in the distal nephron. Involved in the initiation of neuropathic pain in sensory neurons. This chain is Potassium/sodium hyperpolarization-activated cyclic nucleotide-gated channel 2, found in Homo sapiens (Human).